Here is a 494-residue protein sequence, read N- to C-terminus: UPF0371 protein SUB1165 (494 aa).

The protein belongs to the UPF0371 family.

This Streptococcus uberis (strain ATCC BAA-854 / 0140J) protein is UPF0371 protein SUB1165.